A 250-amino-acid chain; its full sequence is ATP synthase subunit a (250 aa).

6 helical membrane-spanning segments follow: residues 29–49 (ASLF…FATS), 84–104 (FFPL…LGMV), 114–134 (IIVT…YGFI), 143–163 (LFVP…IEII), 185–205 (ITLK…ALGI), and 208–228 (AILP…VAFL).

This sequence belongs to the ATPase A chain family. In terms of assembly, F-type ATPases have 2 components, CF(1) - the catalytic core - and CF(0) - the membrane proton channel. CF(1) has five subunits: alpha(3), beta(3), gamma(1), delta(1), epsilon(1). CF(0) has three main subunits: a(1), b(2) and c(9-12). The alpha and beta chains form an alternating ring which encloses part of the gamma chain. CF(1) is attached to CF(0) by a central stalk formed by the gamma and epsilon chains, while a peripheral stalk is formed by the delta and b chains.

Its subcellular location is the cell inner membrane. Functionally, key component of the proton channel; it plays a direct role in the translocation of protons across the membrane. The protein is ATP synthase subunit a of Rhizobium rhizogenes (strain K84 / ATCC BAA-868) (Agrobacterium radiobacter).